Consider the following 158-residue polypeptide: Small ribosomal subunit protein uS7 (158 aa).

This sequence belongs to the universal ribosomal protein uS7 family. Part of the 30S ribosomal subunit. Contacts proteins S9 and S11.

One of the primary rRNA binding proteins, it binds directly to 16S rRNA where it nucleates assembly of the head domain of the 30S subunit. Is located at the subunit interface close to the decoding center, probably blocks exit of the E-site tRNA. This chain is Small ribosomal subunit protein uS7, found in Flavobacterium johnsoniae (strain ATCC 17061 / DSM 2064 / JCM 8514 / BCRC 14874 / CCUG 350202 / NBRC 14942 / NCIMB 11054 / UW101) (Cytophaga johnsonae).